A 157-amino-acid polypeptide reads, in one-letter code: Arginine repressor (157 aa).

Belongs to the ArgR family.

The protein resides in the cytoplasm. Its pathway is amino-acid biosynthesis; L-arginine biosynthesis [regulation]. In terms of biological role, regulates arginine biosynthesis genes. The sequence is that of Arginine repressor from Deinococcus deserti (strain DSM 17065 / CIP 109153 / LMG 22923 / VCD115).